The following is a 1371-amino-acid chain: MAYSIANNPLLRKNFAKIHKIIDIPNLIDIQKNSYKRFLQLDTPVDARKNSGLEAVFRSVFPIRDFSDTASLEYVSYSLGAPKYDVEECHQRGMTFAAPMKVKVRLVVWDVAKDPGTRSIRDIKEQEVYFGEIPLMTDNGTFIINGTERVIVSQLHRSPGVFYDHDKGKTHSSGKVLYSARVIPYRGSWLDFEFDHKDILYVRIDRRRKMPATVLLKALGYSNDALINYFYKSEEVKLGDNGAMTKLADAELLSNQKATADIVDPATGEVILKANRKFTKAALRKMAEHGIKEIPISEEEVVAKVASHDIYDPATGEIIVECNEELTQAKLEEIIQKGITTFQVLFIDNLHVTSSFRDTILIDKIGSTDEALIEIYRRLRPGDPPTLKSALVLFENLFFNAERYDLSAVGRLKLNYKLGVDVPLDCMTLTREDILEVVRYLIELKNGKGNIDDIDHLGNRRVRAVGELLENQYRIGLVRMERAIKERMSLQEVENLMPHDLINSKPVSAVVKEFFGSSQLSQFMDQTNPLSEVTHKRRLSALGPGGLTRERAGFEVRDVHPTHYGRVCPIETPEGPNIGLIASLSTYARINEHGFVETPYRVVSEGKVTDEVRFFSALEEEGHAIAQANAEIDKDGRFAADYISARKSGEFVLVGRDELELMDVAPMQLVSVAASLIPFLENDDANRALMGSNMQRQAVPLLRADSPLVGTGMERVVARDSGVSSVARHNGVVESVDASRIVVKIDEDQYDATGTGVDIYNLIKFARSNQNTCINQRPVVKVGDHVKAGDIIADGPSTDMGELALGQNVLIAFMPWGGYNYEDSILISERLVKDDRYTSIHIEEFEAVARDTKLGKEEITSDIPNLGEETLKDLDESGIIRIGAEVRPGDILVGKITPKGETQLSPEEKLLRAIFGEKAGDVRDTSLRVPPGVEGTVIGAKIFSRKGADKDARTEIIEKAEEMRLRKDEQDEIRIIRDSAIGKLKKLLVGKAAAVKIEGSDGKVLIPKGAAITEEMLKSFSMDRWDEISIADDDTIDEKVAQTLSTLNQQIDIIKYVFDDKVQKLRRGDDLPPGVIKMVKVYIAIKRKLQVGDKMAGRHGNKGVVSRILPEEDMPYMEDGRPVEIVLNPLGVPSRMNVGQILEMHLGWGAKGLGWKIEEFLEKNAPHDEIKRFLKGAYDNPEMDRFLDTLEGEELLNLARRLKRGIPMSSPVFEGASEESIQSMLTHAGFSTTGQVTLYDGKSGDKFMHQVTVGIMYFLKLHHLVDDKIHARSIGPYSLVTQQPLGGKARFGGQRLGEMEVWAMEAYGAAYALQEFLTVKSDDVAGRTRMYEAIVKGKHTLEPGLPESFNVLIKELQSLGLDVELLEGDED.

The protein belongs to the RNA polymerase beta chain family. In terms of assembly, the RNAP catalytic core consists of 2 alpha, 1 beta, 1 beta' and 1 omega subunit. When a sigma factor is associated with the core the holoenzyme is formed, which can initiate transcription.

The catalysed reaction is RNA(n) + a ribonucleoside 5'-triphosphate = RNA(n+1) + diphosphate. Its function is as follows. DNA-dependent RNA polymerase catalyzes the transcription of DNA into RNA using the four ribonucleoside triphosphates as substrates. The polypeptide is DNA-directed RNA polymerase subunit beta (Citrifermentans bemidjiense (strain ATCC BAA-1014 / DSM 16622 / JCM 12645 / Bem) (Geobacter bemidjiensis)).